The primary structure comprises 189 residues: UPF0232 protein MLBr00004 (189 aa).

The segment at threonine 59 to leucine 78 is disordered.

The protein belongs to the UPF0232 family.

The sequence is that of UPF0232 protein MLBr00004 from Mycobacterium leprae (strain Br4923).